The sequence spans 138 residues: Actin-related protein 2/3 complex subunit 5 (138 aa).

Positions 1–21 (MNYEDDNVESGQAGKSDAEYK) are disordered.

This sequence belongs to the ARPC5 family. Component of the Arp2/3 complex composed of arpB/Arp2, arpC/Arp3, arcA/p41-arc, arcB/p34-arc, arcC/p21-arc, arcD/p20-arc and arcE/p16-arc. Interacts with carmil (via the region between the LRR domain and COOH-terminal proline-rich domain); carmil is required for Arp2/3-dependent actin nucleation. Arp2/3 complex, MyoB, MyoC, and the alpha and beta subunits of capping protein all form a larger complex with carmil.

It localises to the cytoplasm. Its subcellular location is the cytoskeleton. The protein resides in the cytosol. It is found in the cell cortex. The protein localises to the cell projection. It localises to the pseudopodium. Its function is as follows. Functions as a component of the Arp2/3 complex which is involved in regulation of actin polymerization and together with an activating nucleation-promoting factor (NPF) mediates the formation of branched actin networks. Seems to contact the pointed end of the daughter actin filament. The Arp2/3 complex is involved in organizing the actin system in cell motility and chemotaxis, in phagocytosis and macropinocytosis, at late steps of endosome processing, and in mitosis. In concert with a group of other proteins, the Arp2/3 complex plays a general role in the rapid activation and adaptation of the actin system to its multiple functions. The protein is Actin-related protein 2/3 complex subunit 5 (arcE) of Dictyostelium discoideum (Social amoeba).